Reading from the N-terminus, the 364-residue chain is Coproporphyrin III ferrochelatase (364 aa).

2 residues coordinate Fe-coproporphyrin III: Arg-29 and Tyr-118. Residues His-169 and Glu-250 each coordinate Fe(2+).

It belongs to the ferrochelatase family.

The protein resides in the cytoplasm. It catalyses the reaction Fe-coproporphyrin III + 2 H(+) = coproporphyrin III + Fe(2+). It participates in porphyrin-containing compound metabolism; protoheme biosynthesis. Its function is as follows. Involved in coproporphyrin-dependent heme b biosynthesis. Catalyzes the insertion of ferrous iron into coproporphyrin III to form Fe-coproporphyrin III. The polypeptide is Coproporphyrin III ferrochelatase (Streptococcus pneumoniae serotype 4 (strain ATCC BAA-334 / TIGR4)).